A 54-amino-acid polypeptide reads, in one-letter code: MSFENFAIITLKENVFALLPEAYAPFDPIVDDLPIIPVLFLLLAFVWQSAVKFR.

Residues 1–17 (MSFENFAIITLKENVFA) constitute a propeptide that is removed on maturation. The chain crosses the membrane as a helical span at residues 33 to 53 (LPIIPVLFLLLAFVWQSAVKF).

Belongs to the PsbK family. As to quaternary structure, PSII is composed of 1 copy each of membrane proteins PsbA, PsbB, PsbC, PsbD, PsbE, PsbF, PsbH, PsbI, PsbJ, PsbK, PsbL, PsbM, PsbT, PsbY, PsbZ, Psb30/Ycf12, at least 3 peripheral proteins of the oxygen-evolving complex and a large number of cofactors. It forms dimeric complexes.

It localises to the plastid. It is found in the chloroplast thylakoid membrane. Its function is as follows. One of the components of the core complex of photosystem II (PSII). PSII is a light-driven water:plastoquinone oxidoreductase that uses light energy to abstract electrons from H(2)O, generating O(2) and a proton gradient subsequently used for ATP formation. It consists of a core antenna complex that captures photons, and an electron transfer chain that converts photonic excitation into a charge separation. This chain is Photosystem II reaction center protein K, found in Euglena deses.